Consider the following 347-residue polypeptide: Haptoglobin (347 aa).

An N-terminal signal peptide occupies residues 1–18 (MSALGAVIALLLWGQLFA). A Sushi domain is found at 31 to 88 (DGCPKPPQIAHGYVEHSVRYQCKNYYRLRTEGDGVYTLNSEKQWINKAVGDKLPECEA). 4 disulfides stabilise this stretch: cysteine 52–cysteine 86, cysteine 90–cysteine 207, cysteine 250–cysteine 281, and cysteine 292–cysteine 322. The Peptidase S1 domain maps to 103–347 (ILGGHLDAKG…DWVQKTIAKN (245 aa)). Asparagine 125, asparagine 148, asparagine 152, and asparagine 182 each carry an N-linked (GlcNAc...) asparagine glycan. The interaction with CD163 stretch occupies residues 259-264 (VPEKKT).

The protein belongs to the peptidase S1 family. In terms of assembly, tetramer of two alpha and two beta chains; disulfide-linked. The hemoglobin/haptoglobin complex is composed of a haptoglobin dimer bound to two hemoglobin alpha-beta dimers. Interacts with CD163. Interacts with ERGIC3.

The protein localises to the secreted. As a result of hemolysis, hemoglobin is found to accumulate in the kidney and is secreted in the urine. Haptoglobin captures, and combines with free plasma hemoglobin to allow hepatic recycling of heme iron and to prevent kidney damage. Haptoglobin also acts as an antioxidant, has antibacterial activity and plays a role in modulating many aspects of the acute phase response. Hemoglobin/haptoglobin complexes are rapidly cleared by the macrophage CD163 scavenger receptor expressed on the surface of liver Kupfer cells through an endocytic lysosomal degradation pathway. In Pongo abelii (Sumatran orangutan), this protein is Haptoglobin (HP).